The following is a 143-amino-acid chain: MTKAIPKIGSRKKVRIGLRRNARFSLRKSARRITKGVIHVQASFNNTIITVTDPQGRVVFWSSAGTCGFKSSRKASPYAGQRTAVDAIRTVGLQRAEVMVKGAGSGRDAALRAIAKSGVRLSCIRDVTPMPHNGCRPPKKRRL.

This sequence belongs to the universal ribosomal protein uS11 family. Part of the 30S ribosomal subunit.

It localises to the plastid. The protein localises to the chloroplast. The chain is Small ribosomal subunit protein uS11c from Saccharum officinarum (Sugarcane).